A 353-amino-acid polypeptide reads, in one-letter code: Phospho-N-acetylmuramoyl-pentapeptide-transferase (353 aa).

Transmembrane regions (helical) follow at residues 16–36 (YISVRAGISFFIAFVLTMYLM), 64–84 (AGTPTMGGVVFIFSTIIATVL), 88–108 (LNNFYIVGGILTLALFSLIGI), 130–150 (LIFQFLCAASIAGILFLYGHS), 160–180 (FPLFEMGVFGIVFWMFVIVGS), 198–218 (SILAFSTLSILVYVVGHAVFA), 228–248 (IAGELAIMGSAICGALIAFLW), 256–276 (VFMGDSGSLPLGAFMGYLAIV), 281–301 (ILLLAIGFIFVWETVSVILQV), and 330–350 (KIIVRFWIIAFMSNLIALLSL).

The protein belongs to the glycosyltransferase 4 family. MraY subfamily. The cofactor is Mg(2+).

Its subcellular location is the cell inner membrane. It carries out the reaction UDP-N-acetyl-alpha-D-muramoyl-L-alanyl-gamma-D-glutamyl-meso-2,6-diaminopimeloyl-D-alanyl-D-alanine + di-trans,octa-cis-undecaprenyl phosphate = di-trans,octa-cis-undecaprenyl diphospho-N-acetyl-alpha-D-muramoyl-L-alanyl-D-glutamyl-meso-2,6-diaminopimeloyl-D-alanyl-D-alanine + UMP. It functions in the pathway cell wall biogenesis; peptidoglycan biosynthesis. Catalyzes the initial step of the lipid cycle reactions in the biosynthesis of the cell wall peptidoglycan: transfers peptidoglycan precursor phospho-MurNAc-pentapeptide from UDP-MurNAc-pentapeptide onto the lipid carrier undecaprenyl phosphate, yielding undecaprenyl-pyrophosphoryl-MurNAc-pentapeptide, known as lipid I. This is Phospho-N-acetylmuramoyl-pentapeptide-transferase from Aliarcobacter butzleri (strain RM4018) (Arcobacter butzleri).